The primary structure comprises 264 residues: Small ribosomal subunit protein uS2 (264 aa).

The protein belongs to the universal ribosomal protein uS2 family.

The polypeptide is Small ribosomal subunit protein uS2 (Helicobacter pylori (strain P12)).